We begin with the raw amino-acid sequence, 344 residues long: GTPase Obg (344 aa).

The 159-residue stretch at Met1 to Ile159 folds into the Obg domain. Residues Ala160 to Asp327 form the OBG-type G domain. Residues Gly166–Ser173, Phe191–His195, Asp212–Gly215, Asn279–Asp282, and Ser308–Ala310 contribute to the GTP site. The Mg(2+) site is built by Ser173 and Thr193.

This sequence belongs to the TRAFAC class OBG-HflX-like GTPase superfamily. OBG GTPase family. As to quaternary structure, monomer. It depends on Mg(2+) as a cofactor.

It localises to the cytoplasm. In terms of biological role, an essential GTPase which binds GTP, GDP and possibly (p)ppGpp with moderate affinity, with high nucleotide exchange rates and a fairly low GTP hydrolysis rate. Plays a role in control of the cell cycle, stress response, ribosome biogenesis and in those bacteria that undergo differentiation, in morphogenesis control. In Ruegeria pomeroyi (strain ATCC 700808 / DSM 15171 / DSS-3) (Silicibacter pomeroyi), this protein is GTPase Obg.